Reading from the N-terminus, the 57-residue chain is MDQTNLLTLEQELKLAIYKQKIYTLNVYNMKQHLRDILKQMMIKENTIKYFIKNSIT.

It belongs to the ycf18/nblA family.

The protein resides in the plastid. The protein localises to the chloroplast. This is an uncharacterized protein from Aglaothamnion neglectum (Red alga).